An 85-amino-acid chain; its full sequence is Small ribosomal subunit protein uS17 (85 aa).

Belongs to the universal ribosomal protein uS17 family. Part of the 30S ribosomal subunit.

In terms of biological role, one of the primary rRNA binding proteins, it binds specifically to the 5'-end of 16S ribosomal RNA. In Mycoplasmoides gallisepticum (strain R(low / passage 15 / clone 2)) (Mycoplasma gallisepticum), this protein is Small ribosomal subunit protein uS17.